Consider the following 290-residue polypeptide: UPF0761 membrane protein CKO_03126 (290 aa).

Transmembrane regions (helical) follow at residues 44–64 (LLSLVPLIAVVFALFAAFPMF), 104–124 (VGACGLIVTALLLMYAIDSAL), 140–160 (FAVYWMILTLGPLLAGASLAI), 183–203 (VFPLILSWISFWLLYSIVPTT), 210–230 (AVVGAFVAAVLFEAGKKGFAL), and 244–264 (VLAVIPILFVWVYWTWCIVLL).

Belongs to the UPF0761 family.

It is found in the cell inner membrane. The sequence is that of UPF0761 membrane protein CKO_03126 from Citrobacter koseri (strain ATCC BAA-895 / CDC 4225-83 / SGSC4696).